The sequence spans 264 residues: E3 ubiquitin-protein ligase MARCHF8 (264 aa).

The interval 15-47 (LGHSVSRSSNISKAGSPTSVSAPSSFPRTSVTP) is disordered. The segment covering 17 to 47 (HSVSRSSNISKAGSPTSVSAPSSFPRTSVTP) has biased composition (polar residues). An RING-CH-type zinc finger spans residues 45-106 (VTPSSQDICR…ELCKFEFIME (62 aa)). Residues Cys53, Cys56, Cys70, Cys72, His80, Cys83, Cys96, and Cys99 each contribute to the Zn(2+) site. Transmembrane regions (helical) follow at residues 130-150 (CSVT…YVLI) and 170-190 (FWTK…FMYV).

It is found in the cytoplasmic vesicle membrane. The protein resides in the lysosome membrane. It localises to the early endosome membrane. It catalyses the reaction S-ubiquitinyl-[E2 ubiquitin-conjugating enzyme]-L-cysteine + [acceptor protein]-L-lysine = [E2 ubiquitin-conjugating enzyme]-L-cysteine + N(6)-ubiquitinyl-[acceptor protein]-L-lysine.. It participates in protein modification; protein ubiquitination. Functionally, E3 ubiquitin-protein ligase that mediates ubiquitination of cd86 and MHC class II proteins, such as hla-dr alpha and beta, and promotes their subsequent endocytosis and sorting to lysosomes via multivesicular bodies. The sequence is that of E3 ubiquitin-protein ligase MARCHF8 (marchf8) from Xenopus tropicalis (Western clawed frog).